The following is a 300-amino-acid chain: UDP-3-O-acyl-N-acetylglucosamine deacetylase (300 aa).

Residues H78, H237, and D241 each coordinate Zn(2+). The active-site Proton donor is H264.

This sequence belongs to the LpxC family. Zn(2+) serves as cofactor.

The enzyme catalyses a UDP-3-O-[(3R)-3-hydroxyacyl]-N-acetyl-alpha-D-glucosamine + H2O = a UDP-3-O-[(3R)-3-hydroxyacyl]-alpha-D-glucosamine + acetate. Its pathway is glycolipid biosynthesis; lipid IV(A) biosynthesis; lipid IV(A) from (3R)-3-hydroxytetradecanoyl-[acyl-carrier-protein] and UDP-N-acetyl-alpha-D-glucosamine: step 2/6. Catalyzes the hydrolysis of UDP-3-O-myristoyl-N-acetylglucosamine to form UDP-3-O-myristoylglucosamine and acetate, the committed step in lipid A biosynthesis. The polypeptide is UDP-3-O-acyl-N-acetylglucosamine deacetylase (Acinetobacter baumannii (strain ATCC 17978 / DSM 105126 / CIP 53.77 / LMG 1025 / NCDC KC755 / 5377)).